A 180-amino-acid polypeptide reads, in one-letter code: Segregation and condensation protein B (180 aa).

This sequence belongs to the ScpB family. Homodimer. Homodimerization may be required to stabilize the binding of ScpA to the Smc head domains. Component of a cohesin-like complex composed of ScpA, ScpB and the Smc homodimer, in which ScpA and ScpB bind to the head domain of Smc. The presence of the three proteins is required for the association of the complex with DNA.

The protein resides in the cytoplasm. In terms of biological role, participates in chromosomal partition during cell division. May act via the formation of a condensin-like complex containing Smc and ScpA that pull DNA away from mid-cell into both cell halves. This is Segregation and condensation protein B from Staphylococcus epidermidis (strain ATCC 35984 / DSM 28319 / BCRC 17069 / CCUG 31568 / BM 3577 / RP62A).